A 1755-amino-acid chain; its full sequence is MESQQLSNYPHISHGSACASVTSKEVHTNQDPLDVSASKIQEYDKASTKANSQQTTTPASSAVPENPHHASPQPASVPPPQNGPYPQQCMMTQNQANPSGWSFYGHPSMIPYTPYQMSPMYFPPGPQSQFPQYPSSVGTPLSTPSPESGNTFTDSSSADSDMTSTKKYVRPPPMLTSPNDFPNWVKTYIKFLQNSNLGGIIPTVNGKPVRPITDDELTFLYNTFQIFAPSQFLPTWVKDILSVDYTDIMKILSKSIEKMQSDTQEANDIVTLANLQYNGSTPADAFETKVTNIIDRLNNNGIHINNKVACQLIMRGLSGEYKFLRYTRHRHLNMTVAELFLDIHAIYEEQQGSRNSKPNYRRNPSDEKNDSRSYTNTTKPKVIARNPQKTNNSKSKTARAHNVSTSNNSPSTDNDSISKSTTEPIQLNNKHDLHLGQKLTESTVNHTNHSDDELPGHLLLDSGASRTLIRSAHHIHSASSNPDINVVDAQKRNIPINAIGDLQFHFQDNTKTSIKVLHTPNIAYDLLSLNELAAVDITACFTKNVLERSDGTVLAPIVKYGDFYWVSKKYLLPSNISVPTINNVHTSESTRKYPYPFIHRMLAHANAQTIRYSLKNNTITYFNESDVDWSSAIDYQCPDCLIGKSTKHRHIKGSRLKYQNSYEPFQYLHTDIFGPVHNLPKSAPSYFISFTDETTKFRWVYPLHDRREDSILDVFTTILAFIKNQFQASVLVIQMDRGSEYTNRTLHKFLEKNGITPCYTTTADSRAHGVAERLNRTLLDDCRTQLQCSGLPNHLWFSAIEFSTIVRNSLASPKSKKSARQHAGLAGLDISTLLPFGQPVIVNDHNPNSKIHPRGIPGYALHPSRNSYGYIIYLPSLKKTVDTTNYVILQGKESRLDQFNYDALTFDEDLNRLTASYHSFIASNEIQESNDLNIESDHDFQSDIELHPEQPRNVLSKAVSPTDSTPPSTHTEDSKRVSKTNIRAPREVDPNISESNILPSKKRSSTPQISNIESTGSGGMHKLNVPLLAPMSQSNTHESSHASKSKDFRHSDSYSENETNHTNVPISSTGGTNNKTVPQISDQETEKRIIHRSPSIDASPPENNSSHNIVPIKTPTTVSEQNTEESIIADLPLPDLPPESPTEFPDPFKELPPINSRQTNSSLGGIGDSNAYTTINSKKRSLEDNETEIKVSRDTWNTKNMRSLEPPRSKKRIHLIAAVKAVKSIKPIRTTLRYDEAITYNKDIKEKEKYIEAYHKEVNQLLKMKTWDTDKYYDRKEIDPKRVINSMFIFNRKRDGTHKARFVARGDIQHPDTYDSGMQSNTVHHYALMTSLSLALDNNYYITQLDISSAYLYADIKEELYIRPPPHLGMNDKLIRLKKSLYGLKQSGANWYETIKSYLIKQCGMEEVRGWSCVFKNSQVTICLFVDDMILFSKDLNSNKRIIAKLKMQYDTKIINLGESDDEIQYDILGLEIKYQRGKYMKLGMENSLTEKIPKLNVPLNPNGRKLGAPGQPGLYINQQELELEEDDYKMKVHEMQKLIGLASYVGYKFRFDLLYYINTLAQHILFPSKQVLDMTYELIQFIWNTRDKQLIWHKSKPVKPTNKLVVISDASYGNQPYYKSQIGNIYLLNGKVIGGKSTKASLTCTSTTEAEIHAISESVPLLNNLSYLIQELDKKPITKGLLTDSKSTISIIISNNEEKFRNRFFGTKAMRLRDEVSGNHLHVCYIETKKNIADVMTKPLPIKTFKLLTNKWIH.

Composition is skewed to polar residues over residues 1–10 (MESQQLSNYP), 48–60 (TKAN…TPAS), and 127–152 (QSQF…GNTF). Disordered stretches follow at residues 1–93 (MESQ…MMTQ), 126–173 (PQSQ…RPPP), and 352–421 (GSRN…SKST). The span at 153–165 (TDSSSADSDMTST) shows a compositional bias: low complexity. Residues 299–401 (NNGIHINNKV…NSKSKTARAH (103 aa)) are RNA-binding. A compositionally biased stretch (low complexity) spans 402–418 (NVSTSNNSPSTDNDSIS). Ser416 bears the Phosphoserine mark. Asp461 acts as the For protease activity; shared with dimeric partner in catalysis. Positions 583 to 640 (NVHTSESTRKYPYPFIHRMLAHANAQTIRYSLKNNTITYFNESDVDWSSAIDYQCPDC) are integrase-type zinc finger-like. Residues 660 to 835 (NSYEPFQYLH…AGLDISTLLP (176 aa)) form the Integrase catalytic domain. Positions 671 and 736 each coordinate Mg(2+). Disordered stretches follow at residues 956–1087 (SKAV…ETEK), 1092–1111 (RSPS…NIVP), and 1130–1187 (DLPL…DNET). The segment covering 960 to 969 (SPTDSTPPST) has biased composition (low complexity). Positions 1005–1015 (STPQISNIEST) are enriched in polar residues. Positions 1038–1053 (ESSHASKSKDFRHSDS) are enriched in basic and acidic residues. Polar residues-rich tracts occupy residues 1054–1082 (YSEN…QISD) and 1101–1111 (PENNSSHNIVP). The short motif at 1178 to 1212 (KKRSLEDNETEIKVSRDTWNTKNMRSLEPPRSKKR) is the Bipartite nuclear localization signal element. The Reverse transcriptase Ty1/copia-type domain occupies 1338 to 1476 (NNYYITQLDI…DILGLEIKYQ (139 aa)). Mg(2+) is bound by residues Asp1346, Asp1427, Asp1428, Asp1610, Glu1652, and Asp1685. Residues 1610–1752 (DASYGNQPYY…IKTFKLLTNK (143 aa)) enclose the RNase H Ty1/copia-type domain.

In terms of assembly, the capsid protein forms a homotrimer, from which the VLPs are assembled. The protease is a homodimer, whose active site consists of two apposed aspartic acid residues. Initially, virus-like particles (VLPs) are composed of the structural unprocessed proteins Gag and Gag-Pol, and also contain the host initiator methionine tRNA (tRNA(i)-Met) which serves as a primer for minus-strand DNA synthesis, and a dimer of genomic Ty RNA. Processing of the polyproteins occurs within the particle and proceeds by an ordered pathway, called maturation. First, the protease (PR) is released by autocatalytic cleavage of the Gag-Pol polyprotein yielding capsid protein p45 and a Pol-p154 precursor protein. This cleavage is a prerequisite for subsequent processing of Pol-p154 at the remaining sites to release the mature structural and catalytic proteins. Maturation takes place prior to the RT reaction and is required to produce transposition-competent VLPs.

The protein localises to the cytoplasm. It is found in the nucleus. The catalysed reaction is DNA(n) + a 2'-deoxyribonucleoside 5'-triphosphate = DNA(n+1) + diphosphate. It catalyses the reaction Endonucleolytic cleavage to 5'-phosphomonoester.. Functionally, capsid protein (CA) is the structural component of the virus-like particle (VLP), forming the shell that encapsulates the retrotransposons dimeric RNA genome. The particles are assembled from trimer-clustered units and there are holes in the capsid shells that allow for the diffusion of macromolecules. CA also has nucleocapsid-like chaperone activity, promoting primer tRNA(i)-Met annealing to the multipartite primer-binding site (PBS), dimerization of Ty1 RNA and initiation of reverse transcription. In terms of biological role, the aspartyl protease (PR) mediates the proteolytic cleavages of the Gag and Gag-Pol polyproteins after assembly of the VLP. Its function is as follows. Reverse transcriptase/ribonuclease H (RT) is a multifunctional enzyme that catalyzes the conversion of the retro-elements RNA genome into dsDNA within the VLP. The enzyme displays a DNA polymerase activity that can copy either DNA or RNA templates, and a ribonuclease H (RNase H) activity that cleaves the RNA strand of RNA-DNA heteroduplexes during plus-strand synthesis and hydrolyzes RNA primers. The conversion leads to a linear dsDNA copy of the retrotransposon that includes long terminal repeats (LTRs) at both ends. Integrase (IN) targets the VLP to the nucleus, where a subparticle preintegration complex (PIC) containing at least integrase and the newly synthesized dsDNA copy of the retrotransposon must transit the nuclear membrane. Once in the nucleus, integrase performs the integration of the dsDNA into the host genome. In Saccharomyces cerevisiae (strain ATCC 204508 / S288c) (Baker's yeast), this protein is Transposon Ty1-OR Gag-Pol polyprotein (TY1B-OR).